Here is a 653-residue protein sequence, read N- to C-terminus: Chaperone protein DnaK (653 aa).

At T198 the chain carries Phosphothreonine; by autocatalysis. Residues 608-617 are compositionally biased toward low complexity; the sequence is DPEAAAHAAG. Positions 608 to 653 are disordered; the sequence is DPEAAAHAAGMHGGAATGGGDGANKHGKGAEDVVEAEFEEVNDDKK. Gly residues predominate over residues 618-629; that stretch reads MHGGAATGGGDG. Residues 639–653 show a composition bias toward acidic residues; the sequence is DVVEAEFEEVNDDKK.

Belongs to the heat shock protein 70 family.

Functionally, acts as a chaperone. In Magnetococcus marinus (strain ATCC BAA-1437 / JCM 17883 / MC-1), this protein is Chaperone protein DnaK.